A 477-amino-acid chain; its full sequence is Monocarboxylate transporter 12-B (477 aa).

At 1 to 9 (MAQEKKKGG) the chain is on the cytoplasmic side. 12 consecutive transmembrane segments (helical) span residues 10–30 (VLPP…VVTV), 58–78 (AWIH…GSLI), 86–106 (IAVI…SFAT), 116–136 (GLLT…MVGI), 148–168 (IAMS…QLLI), 178–198 (LILG…RPII), 253–273 (FLVL…PFVY), 289–309 (AFLM…FGWL), 320–340 (NICY…IPLL), 344–364 (VWLV…VALI), 383–403 (VVYF…GWLV), and 413–433 (FFLS…VAII). The Cytoplasmic segment spans residues 434–477 (RYCQRNQKKNSLSKIPKLVSCEGKQVDYYPPKNKDLMLIIPATS).

Belongs to the major facilitator superfamily. Monocarboxylate porter (TC 2.A.1.13) family.

It is found in the cell membrane. Its subcellular location is the basolateral cell membrane. The enzyme catalyses creatine(in) = creatine(out). It carries out the reaction guanidinoacetate(in) = guanidinoacetate(out). In terms of biological role, functions as a transporter for creatine and as well for its precursor guanidinoacetate. Transport of creatine and GAA is independent of resting membrane potential and extracellular Na(+), Cl(-), or pH. Contributes to the process of creatine biosynthesis and distribution. The polypeptide is Monocarboxylate transporter 12-B (slc16a12b) (Danio rerio (Zebrafish)).